Consider the following 50-residue polypeptide: Alpha-conotoxin CnIG (50 aa).

Positions 1 to 7 (LTTTVVS) are cleaved as a signal peptide. The span at 1–13 (LTTTVVSFPSDSA) shows a compositional bias: polar residues. Residues 1–26 (LTTTVVSFPSDSASDGRDNEAKDERS) are disordered. The propeptide occupies 8 to 35 (FPSDSASDGRDNEAKDERSDMYELKRNG). Residues 14-26 (SDGRDNEAKDERS) show a composition bias toward basic and acidic residues. Intrachain disulfides connect Cys-37–Cys-42 and Cys-38–Cys-48. Position 48 is a cysteine amide (Cys-48).

It belongs to the conotoxin A superfamily. In terms of tissue distribution, expressed by the venom duct.

It is found in the secreted. This is Alpha-conotoxin CnIG from Conus consors (Singed cone).